The primary structure comprises 571 residues: Protein PNS1 (571 aa).

Residues 1 to 96 (MNDEEKHLAA…PDFPPDYNYK (96 aa)) are disordered. Over 1 to 118 (MNDEEKHLAA…AVPKPKWNDK (118 aa)) the chain is Cytoplasmic. Over residues 15 to 31 (YQPNMHYQQQQEKQTGY) the composition is skewed to polar residues. 2 stretches are compositionally biased toward low complexity: residues 39-52 (QGGY…DYYN) and 71-80 (GNPNDNYNNQ). Pro residues predominate over residues 81 to 90 (QPPPYTPDFP). Residues 119–139 (IGLVILALIFSGYLALSIIVI) traverse the membrane as a helical segment. Over 140–166 (RAYAQTHSFQGWGIYSGENDYSLNTHT) the chain is Extracellular. A helical transmembrane segment spans residues 167–187 (LILYAFVLATAMVLSLLYFIA). The Cytoplasmic portion of the chain corresponds to 188 to 189 (AR). The chain crosses the membrane as a helical span at residues 190–210 (VWTKQFIWITYILHLLFSWGT). Position 211 (alanine 211) is a topological domain, extracellular. The chain crosses the membrane as a helical span at residues 212–232 (IYYLVVGYYSAGIVFIVFAAL). Residues 233–263 (TTWWFWCSRKRIPFATIVLQTLIDVTRANPS) are Cytoplasmic-facing. The helical transmembrane segment at 264–284 (VLVISAVGTVVGACFGTWFSF) threads the bilayer. The Extracellular portion of the chain corresponds to 285 to 311 (TIVSIYVKYDPDNRNPGCMTTGGSCSN). A helical membrane pass occupies residues 312–332 (GKLIGLILFAIFCGYYLTEVI). Topologically, residues 333 to 369 (KNVIHVTISGVYGSWYYCSKSDQGMPKHAAMSSFRRA) are cytoplasmic. Residues 370-390 (VTYSLGSISLGSLIVSIINFI) traverse the membrane as a helical segment. Topologically, residues 391 to 406 (RQILSVLQQDARQSGD) are extracellular. Residues 407-427 (TLATVLLCFVQCCFGVLDWLV) traverse the membrane as a helical segment. Topologically, residues 428–472 (TYFNHYAYSYIALYGKAYVPSAKATWKLMQTRGIDAMVNDSLIGS) are cytoplasmic. A helical transmembrane segment spans residues 473–493 (VLSFGASFVAYAAALVAYCFL). Over 494–503 (KYTDPSYNSG) the chain is Extracellular. The chain crosses the membrane as a helical span at residues 504–524 (GGFYAPVVGLAFVIALQVSNI). The Cytoplasmic segment spans residues 525–571 (TNVSLKSGCSTFFLALARDPEVLRVSYPQIYEEICRTYPPARDKLDI).

Belongs to the CTL (choline transporter-like) family.

It localises to the cell membrane. In terms of biological role, probably involved in transport through the plasma membrane. The sequence is that of Protein PNS1 (PNS1) from Yarrowia lipolytica (strain CLIB 122 / E 150) (Yeast).